The chain runs to 145 residues: Basic phospholipase A2 cPt10 (145 aa).

Residues 1-21 (MYPAHLLVLLAVCVSLLGASA) form the signal peptide. Positions 22–27 (IPPLPL) are excised as a propeptide. Intrachain disulfides connect cysteine 38/cysteine 98, cysteine 54/cysteine 144, cysteine 56/cysteine 72, cysteine 71/cysteine 125, cysteine 78/cysteine 118, cysteine 87/cysteine 111, and cysteine 105/cysteine 116. The Ca(2+) site is built by tyrosine 55, glycine 57, and glycine 59. The active site involves histidine 75. Aspartate 76 serves as a coordination point for Ca(2+). The active site involves aspartate 119.

Belongs to the phospholipase A2 family. Group I subfamily. D49 sub-subfamily. Requires Ca(2+) as cofactor. Expressed by the venom gland.

It localises to the secreted. The catalysed reaction is a 1,2-diacyl-sn-glycero-3-phosphocholine + H2O = a 1-acyl-sn-glycero-3-phosphocholine + a fatty acid + H(+). Functionally, PLA2 catalyzes the calcium-dependent hydrolysis of the 2-acyl groups in 3-sn-phosphoglycerides. The polypeptide is Basic phospholipase A2 cPt10 (Laticauda semifasciata (Black-banded sea krait)).